Reading from the N-terminus, the 364-residue chain is MSLNVPSRRLLKSAPSSANALVPALQSLSINTRSIHTTPSQQWSLFGWGKQKVEERNKVKEELKQSELARTRKPTQEEIFERVRGRLEGDSIFADTTPSSQLAAEQDKHKDWATASAEKKLAAAHAKDQTPTGISLKKDHLVRVVDPDPRSRVRWERKMVIRKLQRGTDPWSVEPKAERIARTERKLVYKTGYLPTSVKKLVHLSRQIRGKTVSEALVQMQFSKKKMAKEVKTELLRAEAKAIVTRGMGLGKAAAAAAQKETGAEPVKIQTKDGKHLEIRDPTRIYVAETFVNKGFTRGVELDYRARGRVFKMNKPTTTMTVVLKEEKTRIREHQERVAKKLRQGPWVHLPDRPVTSQRQFYSW.

Belongs to the universal ribosomal protein uL22 family. In terms of assembly, component of the mitochondrial large ribosomal subunit (mt-LSU). Mature N.crassa 74S mitochondrial ribosomes consist of a small (37S) and a large (54S) subunit. The 37S small subunit contains a 16S ribosomal RNA (16S mt-rRNA) and 32 different proteins. The 54S large subunit contains a 23S rRNA (23S mt-rRNA) and 42 different proteins. uL22m forms the wall of the exit tunnel.

It is found in the mitochondrion. Component of the mitochondrial ribosome (mitoribosome), a dedicated translation machinery responsible for the synthesis of mitochondrial genome-encoded proteins, including at least some of the essential transmembrane subunits of the mitochondrial respiratory chain. The mitoribosomes are attached to the mitochondrial inner membrane and translation products are cotranslationally integrated into the membrane. The polypeptide is Large ribosomal subunit protein uL22m (mrpl22) (Neurospora crassa (strain ATCC 24698 / 74-OR23-1A / CBS 708.71 / DSM 1257 / FGSC 987)).